Here is a 290-residue protein sequence, read N- to C-terminus: 4-diphosphocytidyl-2-C-methyl-D-erythritol kinase (290 aa).

K14 is an active-site residue. P103–S113 provides a ligand contact to ATP. D145 is a catalytic residue.

Belongs to the GHMP kinase family. IspE subfamily. As to quaternary structure, homodimer.

It catalyses the reaction 4-CDP-2-C-methyl-D-erythritol + ATP = 4-CDP-2-C-methyl-D-erythritol 2-phosphate + ADP + H(+). It functions in the pathway isoprenoid biosynthesis; isopentenyl diphosphate biosynthesis via DXP pathway; isopentenyl diphosphate from 1-deoxy-D-xylulose 5-phosphate: step 3/6. Functionally, catalyzes the phosphorylation of the position 2 hydroxy group of 4-diphosphocytidyl-2C-methyl-D-erythritol. The sequence is that of 4-diphosphocytidyl-2-C-methyl-D-erythritol kinase from Pectobacterium carotovorum subsp. carotovorum (strain PC1).